A 162-amino-acid chain; its full sequence is Phosphopantetheine adenylyltransferase (162 aa).

S11 is a binding site for substrate. Residues 11-12 (SF) and H19 contribute to the ATP site. Residues K43, V76, and R90 each contribute to the substrate site. ATP is bound by residues 91–93 (GLR), E101, and 126–132 (HLYISSS).

This sequence belongs to the bacterial CoaD family. In terms of assembly, homohexamer. Mg(2+) is required as a cofactor.

It is found in the cytoplasm. It carries out the reaction (R)-4'-phosphopantetheine + ATP + H(+) = 3'-dephospho-CoA + diphosphate. Its pathway is cofactor biosynthesis; coenzyme A biosynthesis; CoA from (R)-pantothenate: step 4/5. In terms of biological role, reversibly transfers an adenylyl group from ATP to 4'-phosphopantetheine, yielding dephospho-CoA (dPCoA) and pyrophosphate. This is Phosphopantetheine adenylyltransferase from Streptococcus pneumoniae (strain CGSP14).